The following is a 66-amino-acid chain: Large ribosomal subunit protein bL35 (66 aa).

A compositionally biased stretch (basic residues) spans M1–H26. A disordered region spans residues M1–Y28.

The protein belongs to the bacterial ribosomal protein bL35 family.

The chain is Large ribosomal subunit protein bL35 from Geobacillus thermodenitrificans (strain NG80-2).